A 98-amino-acid chain; its full sequence is NADH-ubiquinone oxidoreductase chain 4L (98 aa).

Transmembrane regions (helical) follow at residues 1 to 21 (MPVVYVNIFLAFIVSLVGLLI), 29 to 49 (SLLCLEGMMLSLFVMLTVTVL), and 61 to 81 (IILLVFAACEAALGLSLLVMV).

This sequence belongs to the complex I subunit 4L family. As to quaternary structure, core subunit of respiratory chain NADH dehydrogenase (Complex I) which is composed of 45 different subunits.

It is found in the mitochondrion inner membrane. It carries out the reaction a ubiquinone + NADH + 5 H(+)(in) = a ubiquinol + NAD(+) + 4 H(+)(out). In terms of biological role, core subunit of the mitochondrial membrane respiratory chain NADH dehydrogenase (Complex I) which catalyzes electron transfer from NADH through the respiratory chain, using ubiquinone as an electron acceptor. Part of the enzyme membrane arm which is embedded in the lipid bilayer and involved in proton translocation. The chain is NADH-ubiquinone oxidoreductase chain 4L (MT-ND4L) from Ursus maritimus (Polar bear).